Reading from the N-terminus, the 396-residue chain is MSEFIAENRGADAITRPNWSAVFSVAFCVACLIIVEFLPVSLLTPMAQDLGISEGVAGQSVTVTAFVAMFASLFITQTIQATDRRYVVILFAVLLTLSCLLVSFANSFSLLLIGRACLGLALGGFWAMSASLTMRLVPPRTVPKALSVIFGAVSIALVIAAPLGSFLGELIGWRNVFNAAAVMGVLCIFWIIKSLPSLPGEPSHQKQNTFRLLQRPGVMAGMIAIFMSFAGQFAFFTYIRPVYMNLAGFGVDGLTLVLLSFGIASFIGTSLSSFILKRSVKLALAGAPLILAVSALVLTLWGSDKIVATGVAIIWGLTFALVPVGWSTWITRSLADQAEKAGSIQVAVIQLANTCGAAIGGYALDNIGLTSPLMLSGTLMLLTALLVTAKVKMKKS.

Residues 1–21 are Cytoplasmic-facing; the sequence is MSEFIAENRGADAITRPNWSA. Residues 22-42 form a helical membrane-spanning segment; sequence VFSVAFCVACLIIVEFLPVSL. Topologically, residues 43 to 54 are periplasmic; that stretch reads LTPMAQDLGISE. Residues 55–75 traverse the membrane as a helical segment; that stretch reads GVAGQSVTVTAFVAMFASLFI. At 76 to 85 the chain is on the cytoplasmic side; the sequence is TQTIQATDRR. The helical transmembrane segment at 86 to 106 threads the bilayer; it reads YVVILFAVLLTLSCLLVSFAN. Residue Ser-107 is a topological domain, periplasmic. A helical membrane pass occupies residues 108–128; it reads FSLLLIGRACLGLALGGFWAM. Over 129–147 the chain is Cytoplasmic; the sequence is SASLTMRLVPPRTVPKALS. The chain crosses the membrane as a helical span at residues 148-168; the sequence is VIFGAVSIALVIAAPLGSFLG. Residues 169 to 175 lie on the Periplasmic side of the membrane; sequence ELIGWRN. Residues 176 to 196 traverse the membrane as a helical segment; the sequence is VFNAAAVMGVLCIFWIIKSLP. Residues 197–215 lie on the Cytoplasmic side of the membrane; the sequence is SLPGEPSHQKQNTFRLLQR. A helical membrane pass occupies residues 216–236; sequence PGVMAGMIAIFMSFAGQFAFF. Topologically, residues 237 to 255 are periplasmic; the sequence is TYIRPVYMNLAGFGVDGLT. Residues 256–276 form a helical membrane-spanning segment; that stretch reads LVLLSFGIASFIGTSLSSFIL. Residues 277–281 are Cytoplasmic-facing; sequence KRSVK. The helical transmembrane segment at 282–302 threads the bilayer; that stretch reads LALAGAPLILAVSALVLTLWG. Residues 303-305 lie on the Periplasmic side of the membrane; the sequence is SDK. Residues 306 to 326 traverse the membrane as a helical segment; the sequence is IVATGVAIIWGLTFALVPVGW. Residues 327–343 are Cytoplasmic-facing; it reads STWITRSLADQAEKAGS. The helical transmembrane segment at 344–364 threads the bilayer; that stretch reads IQVAVIQLANTCGAAIGGYAL. Over 365–366 the chain is Periplasmic; that stretch reads DN. A helical transmembrane segment spans residues 367-387; that stretch reads IGLTSPLMLSGTLMLLTALLV. Residues 388 to 396 are Cytoplasmic-facing; it reads TAKVKMKKS.

Belongs to the major facilitator superfamily. DHA1 family. NepI (TC 2.A.1.2.26) subfamily.

The protein localises to the cell inner membrane. It catalyses the reaction inosine(in) + H(+)(out) = inosine(out) + H(+)(in). The catalysed reaction is guanosine(in) + H(+)(out) = guanosine(out) + H(+)(in). In terms of biological role, involved in the efflux of purine ribonucleosides, such as inosine and guanosine. This Shigella flexneri protein is Purine ribonucleoside efflux pump NepI.